We begin with the raw amino-acid sequence, 1182 residues long: DNA-directed RNA polymerase subunit beta (1182 aa).

Residues D1150–N1162 show a composition bias toward acidic residues. The disordered stretch occupies residues D1150–E1182. Residues E1171–E1182 show a composition bias toward low complexity.

This sequence belongs to the RNA polymerase beta chain family. The RNAP catalytic core consists of 2 alpha, 1 beta, 1 beta' and 1 omega subunit. When a sigma factor is associated with the core the holoenzyme is formed, which can initiate transcription.

It carries out the reaction RNA(n) + a ribonucleoside 5'-triphosphate = RNA(n+1) + diphosphate. Its function is as follows. DNA-dependent RNA polymerase catalyzes the transcription of DNA into RNA using the four ribonucleoside triphosphates as substrates. This Exiguobacterium sp. (strain ATCC BAA-1283 / AT1b) protein is DNA-directed RNA polymerase subunit beta.